A 2004-amino-acid chain; its full sequence is Immunoglobulin A1 protease (2004 aa).

The N-terminal stretch at 1–42 (MEKYFGEKQERFSFRKLSVGLVSATISSLFFMSVLASSSVDA) is a signal peptide. The propeptide occupies 43-99 (QETAGVHYKYVADSELSSEEKKQLVYDIPTYVENDDETYYLVYKLNSQNQLAELPNT). Residues 96 to 100 (LPNTG) carry the LPXTG sorting signal motif. The residue at position 99 (T99) is a Pentaglycyl murein peptidoglycan amidated threonine. 2 helical membrane-spanning segments follow: residues 106–125 (QALV…FAVS) and 132–154 (KTVL…VHAL). Over 155-2004 (ENHLLLNYNT…FRSSIFENKK (1850 aa)) the chain is Extracellular. Disordered regions lie at residues 194–213 (TTSE…PTKQ), 235–305 (QEQT…NPQD), 373–394 (EIVS…TKKT), and 422–720 (PELP…PEKT). 2 stretches are compositionally biased toward polar residues: residues 197–213 (ESEV…PTKQ) and 235–246 (QEQTPVSSTKPT). The segment covering 276–296 (LAEHKNLETKKEEKISPKEKT) has biased composition (basic and acidic residues). Residues 314–393 (KPELLYREET…PRIVEKGTKK (80 aa)) form the G5 domain. 3 tandem repeats follow at residues 419 to 435 (AIQP…KGEP), 436 to 452 (EVQP…KGET), and 453 to 469 (EVQP…KGEP). The tract at residues 419–469 (AIQPELPEAVVSDKGEPEVQPTLPEAVVTDKGETEVQPESPDTVVSDKGEP) is 3 X 17 AA approximate tandem repeats. Residues 485-511 (VKPETPVEKTKEQGPEKTEEVPVKPTE) are compositionally biased toward basic and acidic residues. 2 stretches are compositionally biased toward polar residues: residues 516–529 (NPNE…SIQE) and 538–572 (EEST…SVGE). The span at 574–591 (NKPEHNDSKNENSEKTVE) shows a compositional bias: basic and acidic residues. 2 stretches are compositionally biased toward polar residues: residues 618–639 (EETQ…SNKP) and 648–681 (ESNQ…PSNG). Residues 682–699 (NSTEDVSTESNTSNSNGN) show a composition bias toward low complexity. The segment covering 700 to 720 (EEIKQENELDPDKKVEEPEKT) has biased composition (basic and acidic residues). H1645 contributes to the Zn(2+) binding site. The active site involves E1646. Zn(2+) is bound by residues H1649 and E1669.

The protein belongs to the peptidase M26 family. Zn(2+) serves as cofactor. The Gram-positive cell-wall anchor motif LPXTG is located in the N-terminal part, in contrast to such motifs in other known streptococcal and staphylococcal proteins. The protease could be cleaved by the sortase and anchored in the membrane via the two potential N-terminal transmembrane domains, whereas the propeptide located prior to the LPXTG motif would remain attached to the cell wall peptidoglycan by an amide bond.

The protein resides in the secreted. It is found in the cell wall. It localises to the membrane. It catalyses the reaction Cleavage of Pro-|-Thr bond in the hinge region of the heavy chain of human IgA.. Zinc metalloproteinase which cleaves human immunoglobulin A1 (IgA1) in the hinge region, rendering it less efficient in coating the surface of colonizing or invading pneumococci. Strongly contributes to virulence in mice. May be responsible for pneumococcal infection and is potentially involved in distinct stages of pneumococcal disease. The protein is Immunoglobulin A1 protease (iga) of Streptococcus pneumoniae serotype 4 (strain ATCC BAA-334 / TIGR4).